The following is a 350-amino-acid chain: MSTVQTVLGTITPNLLGRTLTHEHVALDFEHFYRPPPPDFESELKAKISMSTLGYVRLYPYSSKENVRFYDGEALEAAKKDVLLYKKHGGGSIVENSSYGLKRNLEFIVELAKSTGVHFIAGTGHYIHAMQDASHASLTVEQMSDLYSKDIITGLQVNGKVVKCGFIGEVASVYPIHDFEKNAIKAAGEIQEVLGCGVSMHPHRVTKAPFEIMRLYLEAGGRADKCVMSHLDRTIFDIDELLEFAKLGCYIQYDLFGTECSFYQLNTSVDMISDGQRIDNLIKLIKEGLVDKLLMSHDIHTKHRLTSYGGHGYHHIHTNILPRMFDRGVTLEQVEQMTVTNPAKWLAFDP.

Residues histidine 22, histidine 24, glutamate 169, histidine 201, histidine 230, and aspartate 298 each coordinate a divalent metal cation.

It belongs to the metallo-dependent hydrolases superfamily. Phosphotriesterase family. It depends on a divalent metal cation as a cofactor.

The sequence is that of Phosphotriesterase-related protein from Drosophila melanogaster (Fruit fly).